Consider the following 85-residue polypeptide: Small ribosomal subunit protein uS17 (85 aa).

The protein belongs to the universal ribosomal protein uS17 family. In terms of assembly, part of the 30S ribosomal subunit.

Functionally, one of the primary rRNA binding proteins, it binds specifically to the 5'-end of 16S ribosomal RNA. This Aggregatibacter actinomycetemcomitans (Actinobacillus actinomycetemcomitans) protein is Small ribosomal subunit protein uS17.